The chain runs to 987 residues: 110 kDa U5 small nuclear ribonucleoprotein component CLO (987 aa).

A disordered region spans residues Met1–Trp54. Positions Ile17–Leu32 are enriched in acidic residues. In terms of domain architecture, tr-type G spans Ala136–Tyr422. Positions Gly145–Thr152 are G1. A GTP-binding site is contributed by Gly145–Thr152. Residues Asn189 to Lys193 are G2. The segment at Asp215–Gly218 is G3. GTP-binding positions include Asp215–His219 and Asn269–Asp272. The interval Asn269–Asp272 is G4. Positions Tyr395–Gln397 are G5.

It belongs to the TRAFAC class translation factor GTPase superfamily. Classic translation factor GTPase family. Interacts with BRR2A and PRP8A. Expressed in flower buds, open flowers and siliques. Expressed at low levels in rosettes leaves, cauline leaves and stems.

The protein resides in the nucleus speckle. Its function is as follows. Splicing factor involved in pre-mRNA splicing and component of the spliceosome. Essential for reproduction. In female gametophyte, is necessary for the egg cell and central cell fate determination and hence reproductive success. Involved in a mechanism that prevents accessory cells from adopting gametic cell fate. Is necessary to restrict LIS expression to interfere with egg-cell specification. Probable component of U5 small nuclear ribonucleoprotein (snRNP) that is required for pre-mRNA splicing. Plays an essential role in female gametogenesis and embryo development. Required for the control of polarized cell growth and cell proliferation during floral organ morphogenesis. This chain is 110 kDa U5 small nuclear ribonucleoprotein component CLO, found in Arabidopsis thaliana (Mouse-ear cress).